An 83-amino-acid chain; its full sequence is MVTIRLARGGSKKRPFYHLTVTNSRNPRDGRFVERIGFFNPIATGAEVKLSVNQERAAYWLSQGAQPSERVAQLLKEAAKAAA.

It belongs to the bacterial ribosomal protein bS16 family.

The chain is Small ribosomal subunit protein bS16 from Stutzerimonas stutzeri (strain A1501) (Pseudomonas stutzeri).